The sequence spans 168 residues: Myosin regulatory light chain 11 (168 aa).

The residue at position 2 (A2) is a N,N,N-trimethylalanine. S15 bears the Phosphoserine mark. 3 EF-hand domains span residues 24–59 (TQIQEFKEAFTVIDQNRDGIIDKDDLRETFAAMGRL), 94–129 (DPEDVIMGAFKVLDPDGKGSIKKSFLEELLTTQCDR), and 130–165 (FTPEEIKNMWAAFPPDVAGNVDYKNICYVITHGEDK). D37, N39, D41, and D48 together coordinate Ca(2+).

Myosin is a hexamer of 2 heavy chains and 4 light chains. Post-translationally, the N-terminus is blocked. N,N,N-trimethylalanine, found in other myosin light chains would not have been detected in the N-terminal tryptic peptide in PubMed:7358336 because it would remain trimethylated and ninhydrin negative after hydrolysis.

Its function is as follows. Myosin regulatory subunit that plays an essential to maintain muscle integrity during early development. Plays a role in muscle contraction. The protein is Myosin regulatory light chain 11 (MYL11) of Gallus gallus (Chicken).